Consider the following 449-residue polypeptide: Histidinol dehydrogenase (449 aa).

Y136, Q204, and N232 together coordinate NAD(+). Substrate is bound by residues T255, Q277, and H280. Zn(2+)-binding residues include Q277 and H280. Active-site proton acceptor residues include E346 and H347. Substrate contacts are provided by H347, D380, E434, and H439. D380 is a Zn(2+) binding site. H439 lines the Zn(2+) pocket.

This sequence belongs to the histidinol dehydrogenase family. Requires Zn(2+) as cofactor.

The enzyme catalyses L-histidinol + 2 NAD(+) + H2O = L-histidine + 2 NADH + 3 H(+). It functions in the pathway amino-acid biosynthesis; L-histidine biosynthesis; L-histidine from 5-phospho-alpha-D-ribose 1-diphosphate: step 9/9. Functionally, catalyzes the sequential NAD-dependent oxidations of L-histidinol to L-histidinaldehyde and then to L-histidine. This chain is Histidinol dehydrogenase (hisD), found in Mycobacterium leprae (strain TN).